The following is a 902-amino-acid chain: Cytosolic 10-formyltetrahydrofolate dehydrogenase (902 aa).

Residues 1-310 (MKIAVIGQSL…PASQYYKTAD (310 aa)) form a hydrolase domain region. A (6R)-10-formyltetrahydrofolate-binding site is contributed by 88 to 90 (QFI). His-106 functions as the Proton donor in the catalytic mechanism. Asp-142 is a binding site for (6R)-10-formyltetrahydrofolate. The region spanning 318-395 (DEEKKFSEEI…EFIQMVVRRL (78 aa)) is the Carrier domain. Ser-354 carries the O-(pantetheine 4'-phosphoryl)serine modification. The tract at residues 417–902 (TVKIPHQLFI…LKTKAVTIEY (486 aa)) is aldehyde dehydrogenase domain. NADP(+)-binding positions include 571–573 (IPW), 597–600 (KPAQ), 630–635 (GSLIGQ), 650–651 (GS), and 673–674 (EL). The active-site Proton acceptor is Glu-673. Cys-707 (proton donor) is an active-site residue. Residues Lys-757 and 804 to 806 (ESF) each bind NADP(+).

In the N-terminal section; belongs to the GART family. It in the C-terminal section; belongs to the aldehyde dehydrogenase family. ALDH1L subfamily. Homotetramer. Phosphopantetheinylation at Ser-354 by AASDHPPT is required for the formyltetrahydrofolate dehydrogenase activity.

It is found in the cytoplasm. The protein localises to the cytosol. The catalysed reaction is (6R)-10-formyltetrahydrofolate + NADP(+) + H2O = (6S)-5,6,7,8-tetrahydrofolate + CO2 + NADPH + H(+). Its function is as follows. Cytosolic 10-formyltetrahydrofolate dehydrogenase that catalyzes the NADP(+)-dependent conversion of 10-formyltetrahydrofolate to tetrahydrofolate and carbon dioxide. May also have an NADP(+)-dependent aldehyde dehydrogenase activity towards formaldehyde, acetaldehyde, propionaldehyde, and benzaldehyde. Regulates reduced folate pools as well as glycine metabolism. The protein is Cytosolic 10-formyltetrahydrofolate dehydrogenase (aldh1l1) of Xenopus tropicalis (Western clawed frog).